Here is a 178-residue protein sequence, read N- to C-terminus: MASKGVNKVILVGNLGQDPEVRYMPNGGAVVNLSLATSDTWTDKQTGDKKERTEWHRVVLYGKLAEIASEYLRKGSQVYIEGALRTRKWTDQSGVEKYTTEVVVSQSGTMQMLGGRNSAGSGQQQGGWGQPQQPAAPSHSGMPPQQHPANEPPMDFDDDIPFAPFGHSVARHALYVLS.

In terms of domain architecture, SSB spans 6–111 (VNKVILVGNL…VVVSQSGTMQ (106 aa)). A DNA-binding region spans residues 55–61 (WHRVVLY). The segment at 111 to 161 (QMLGGRNSAGSGQQQGGWGQPQQPAAPSHSGMPPQQHPANEPPMDFDDDIP) is disordered.

As to quaternary structure, homotetramer.

The chain is Single-stranded DNA-binding protein 2 (ssb2) from Salmonella typhi.